The sequence spans 311 residues: tRNA (guanine-N(7)-)-methyltransferase (311 aa).

S-adenosyl-L-methionine contacts are provided by Glu-28, Glu-53, and Asp-103. Asp-103 is a catalytic residue. Lys-107 and Asp-139 together coordinate substrate.

The protein belongs to the class I-like SAM-binding methyltransferase superfamily. TrmB family.

The enzyme catalyses guanosine(46) in tRNA + S-adenosyl-L-methionine = N(7)-methylguanosine(46) in tRNA + S-adenosyl-L-homocysteine. Its pathway is tRNA modification; N(7)-methylguanine-tRNA biosynthesis. Catalyzes the formation of N(7)-methylguanine at position 46 (m7G46) in tRNA. This is tRNA (guanine-N(7)-)-methyltransferase from Thermus thermophilus (strain ATCC BAA-163 / DSM 7039 / HB27).